The primary structure comprises 739 residues: Phosphoribosylformylglycinamidine synthase subunit PurL (739 aa).

Residue H53 is part of the active site. ATP-binding residues include Y56 and K95. E97 contributes to the Mg(2+) binding site. Residues 98–101 (SHNH) and R120 each bind substrate. The active-site Proton acceptor is the H99. Position 121 (D121) interacts with Mg(2+). Q244 is a binding site for substrate. Residue D274 coordinates Mg(2+). 318-320 (ESQ) contributes to the substrate binding site. ATP contacts are provided by D501 and G538. N539 is a Mg(2+) binding site. Residue S541 coordinates substrate.

The protein belongs to the FGAMS family. Monomer. Part of the FGAM synthase complex composed of 1 PurL, 1 PurQ and 2 PurS subunits.

It is found in the cytoplasm. It carries out the reaction N(2)-formyl-N(1)-(5-phospho-beta-D-ribosyl)glycinamide + L-glutamine + ATP + H2O = 2-formamido-N(1)-(5-O-phospho-beta-D-ribosyl)acetamidine + L-glutamate + ADP + phosphate + H(+). The protein operates within purine metabolism; IMP biosynthesis via de novo pathway; 5-amino-1-(5-phospho-D-ribosyl)imidazole from N(2)-formyl-N(1)-(5-phospho-D-ribosyl)glycinamide: step 1/2. Functionally, part of the phosphoribosylformylglycinamidine synthase complex involved in the purines biosynthetic pathway. Catalyzes the ATP-dependent conversion of formylglycinamide ribonucleotide (FGAR) and glutamine to yield formylglycinamidine ribonucleotide (FGAM) and glutamate. The FGAM synthase complex is composed of three subunits. PurQ produces an ammonia molecule by converting glutamine to glutamate. PurL transfers the ammonia molecule to FGAR to form FGAM in an ATP-dependent manner. PurS interacts with PurQ and PurL and is thought to assist in the transfer of the ammonia molecule from PurQ to PurL. This chain is Phosphoribosylformylglycinamidine synthase subunit PurL, found in Listeria monocytogenes serotype 4a (strain HCC23).